The chain runs to 240 residues: MQQASTPTIGMIVPPAAGLVPADGARLYPDLPFIASGLGLGSVTPEGYDAVIESVVDHARRLQKQGAAVVSLMGTSLSFYRGAAFNAALTVAMREATGLPCTTMSTAVLNGLRALGVRRVALATAYIDDVNERLAAFLAEESLVPTGCRSLGITGVEAMARVDTATLVDLCVRAFEAAPDSDGILLSCGGLLTLDAIPEVERRLGVPVVSSSPAGFWDAVRLAGGGAKARPGYGRLFDES.

It carries out the reaction 2-aryl-2-methylmalonate + H(+) = 2-arylpropionate + CO2. The protein is Arylmalonate decarboxylase of Bordetella bronchiseptica (Alcaligenes bronchisepticus).